The primary structure comprises 321 residues: Tet-like dioxygenase 1 (321 aa).

Positions 198-298 (DSYYALNNCL…RIGLVYFAHK (101 aa)) constitute a Fe2OG dioxygenase domain. 2-oxoglutarate-binding residues include asparagine 214 and arginine 224. 2 residues coordinate Fe cation: histidine 229 and aspartate 231. Position 242 (tyrosine 242) interacts with 2-oxoglutarate. Residue histidine 279 participates in Fe cation binding. 2-oxoglutarate is bound at residue arginine 289. Glutamine 310 contributes to the substrate binding site.

The cofactor is Fe(2+).

The catalysed reaction is a 5-methyl-2'-deoxycytidine in DNA + 2-oxoglutarate + O2 = a 5-hydroxymethyl-2'-deoxycytidine in DNA + succinate + CO2. It catalyses the reaction a 5-hydroxymethyl-2'-deoxycytidine in DNA + 2-oxoglutarate + O2 = a 5-formyl-2'-deoxycytidine in DNA + succinate + CO2 + H2O. It carries out the reaction a 5-formyl-2'-deoxycytidine in DNA + 2-oxoglutarate + O2 = a 5-carboxyl-2'-deoxycytidine in DNA + succinate + CO2 + H(+). Functionally, dioxygenase that catalyzes the conversion of the modified genomic base 5-methylcytosine (5mC) into 5-hydroxymethylcytosine (5hmC), and thereby plays a role in active DNA demethylation. Also mediates subsequent conversion of 5hmC into 5-formylcytosine (5fC), and conversion of 5fC to 5-carboxylcytosine (5caC). The chain is Tet-like dioxygenase 1 from Naegleria gruberi (Amoeba).